Reading from the N-terminus, the 953-residue chain is Protein translocase subunit SecA 1 (953 aa).

Residues Q83, 101 to 105 (GEGKT), and D490 contribute to the ATP site. Over residues 854-867 (AAAAAAKASDSAAK) the composition is skewed to low complexity. The tract at residues 854–953 (AAAAAAKASD…DRPAKSHRKG (100 aa)) is disordered. The segment covering 929–947 (SRRERREAARKQAKADRPA) has biased composition (basic and acidic residues).

It belongs to the SecA family. In terms of assembly, monomer and homodimer. Part of the essential Sec protein translocation apparatus which comprises SecA, SecYEG and auxiliary proteins SecDF. Other proteins may also be involved.

It localises to the cell membrane. Its subcellular location is the cytoplasm. It catalyses the reaction ATP + H2O + cellular proteinSide 1 = ADP + phosphate + cellular proteinSide 2.. Part of the Sec protein translocase complex. Interacts with the SecYEG preprotein conducting channel. Has a central role in coupling the hydrolysis of ATP to the transfer of proteins into and across the cell membrane, serving as an ATP-driven molecular motor driving the stepwise translocation of polypeptide chains across the membrane. In Mycolicibacterium smegmatis (strain ATCC 700084 / mc(2)155) (Mycobacterium smegmatis), this protein is Protein translocase subunit SecA 1.